The chain runs to 880 residues: MNKLIYYFGNNGSDGNASMNNILGNKGAGLAEMSNLKLPIPNGFTITTELCNYFYKHNNNFPKNFQNELQQAISKLEVTTGKIFGSTTSNPLLLSVRSGSTVSMPGMMDTILNLGMNNEVCNALADACGNKLFALDSYRRFLEMYGSTVLSIPSDLFEQIYENHKIQADIYKDSDITVELLEKIIDDFKRLHIKYDKQLINDPYEQLESAIKAVLYSWKNNRAIIYRKLNNISEDFGTAINIQEMVFGNLGKTSATGVAFTRSPSTGEKKLFGEFLINAQGEDIVSGTRTPMPIIANDSNSMQAMMPEVFKELSQIAKKLEEHYLDMQDIEFTIENNKLYILQTRTAKRTAIAAINIAVQMVKEKLISKEQALMRIDPESLNQLLHTRIDYSKGLTSIAEGLPASPGAATGIVVFSPYDAEKLSHHHKVILVRHDTSPEDINGMHVSSGILTIRGGMTSHAAVVARGMGKPCVCGTNNLSIDEQKQILIAGDIVIKQGDIITIDGGSGKIFLGEMPLIQPTFSEESKLILDWADEISSLKVRANAETVNDALVSIKFGAQGIGLCRSEHMFFDKNKIPLVREMIIAPDIERRQCALQKLLPLQTEDFKSLFRVMKNKPVNIRLLDPPLHEFLPTTEEDKKNLANSLNLPLSMIHQRLHAMHEVNPMLGHRGCRLGICLPEIYQMQIEAIFTAIFELHKKEHIESNLELMIPLISNVAEIKKLKMYIYEVVQELEQRYSYKFSFTLGTMIELPRAALESKKIAKEVDYFSFGTNDLTQTTYGISRDDIASFLPYYLEEKIFESDPFTTLDEEGVGELIEIAIKRGKSSNANLKLGACGEHAGNPTSIAFFHKANLNYVSCSPYRIPIARIAAAQAKIKQGS.

The tract at residues 1–348 (MNKLIYYFGN…LYILQTRTAK (348 aa)) is N-terminal. Position 97 (Arg-97) interacts with ATP. The interval 349–405 (RTAIAAINIAVQMVKEKLISKEQALMRIDPESLNQLLHTRIDYSKGLTSIAEGLPAS) is linker 1. The tract at residues 406 to 503 (PGAATGIVVF…VIKQGDIITI (98 aa)) is central. Thr-458 carries the phosphothreonine; by PDRP1 modification. His-460 functions as the Tele-phosphohistidine intermediate in the catalytic mechanism. Residues 504–538 (DGGSGKIFLGEMPLIQPTFSEESKLILDWADEISS) are linker 2. Residues 539 to 880 (LKVRANAETV…AAQAKIKQGS (342 aa)) are C-terminal. Residues Arg-566, Arg-622, Glu-750, Gly-771, Thr-772, Asn-773, and Asp-774 each coordinate substrate. Glu-750 is a Mg(2+) binding site. Asp-774 is a Mg(2+) binding site. Cys-836 serves as the catalytic Proton donor.

It belongs to the PEP-utilizing enzyme family. As to quaternary structure, homodimer. It depends on Mg(2+) as a cofactor. In terms of processing, phosphorylation of Thr-458 in the dark inactivates the enzyme. Dephosphorylation upon light stimulation reactivates the enzyme.

It catalyses the reaction pyruvate + phosphate + ATP = phosphoenolpyruvate + AMP + diphosphate + H(+). Its activity is regulated as follows. Activated by light-induced dephosphorylation. Inhibited by dark-induced phosphorylation. Both reactions are catalyzed by PDRP1. Catalyzes the reversible phosphorylation of pyruvate and phosphate. This is Pyruvate, phosphate dikinase (ppdK) from Rickettsia prowazekii (strain Madrid E).